A 213-amino-acid polypeptide reads, in one-letter code: Large ribosomal subunit protein uL3 (213 aa).

Gln-151 carries the N5-methylglutamine modification.

This sequence belongs to the universal ribosomal protein uL3 family. In terms of assembly, part of the 50S ribosomal subunit. Forms a cluster with proteins L14 and L19. Methylated by PrmB.

Functionally, one of the primary rRNA binding proteins, it binds directly near the 3'-end of the 23S rRNA, where it nucleates assembly of the 50S subunit. The polypeptide is Large ribosomal subunit protein uL3 (Rhizobium etli (strain CIAT 652)).